Here is a 246-residue protein sequence, read N- to C-terminus: tRNA (guanine-N(1)-)-methyltransferase (246 aa).

Residues glycine 113 and 133–138 each bind S-adenosyl-L-methionine; that span reads IGDYVL.

Belongs to the RNA methyltransferase TrmD family. As to quaternary structure, homodimer.

It is found in the cytoplasm. It catalyses the reaction guanosine(37) in tRNA + S-adenosyl-L-methionine = N(1)-methylguanosine(37) in tRNA + S-adenosyl-L-homocysteine + H(+). Specifically methylates guanosine-37 in various tRNAs. This chain is tRNA (guanine-N(1)-)-methyltransferase, found in Haemophilus influenzae (strain 86-028NP).